The chain runs to 223 residues: Adenylate kinase 4, mitochondrial (223 aa).

15-20 (GSGKGT) serves as a coordination point for a ribonucleoside 5'-triphosphate. Residues 35–64 (SSGHFLRENIKASTEVGEMAKQYIEKSLLV) are NMP. AMP-binding residues include S36 and R41. An N6-succinyllysine modification is found at K60. AMP contacts are provided by residues 62–64 (LLV), 89–92 (GFPR), and Q96. The LID stretch occupies residues 125 to 162 (RRWIHPPSGRVYNLDFNPPHVHGIDDVTGEPLVQQEDD). Residues R126 and 135–136 (VY) each bind a ribonucleoside 5'-triphosphate. An AMP-binding site is contributed by R170. K175 carries the post-translational modification N6-acetyllysine. K179 and K186 each carry N6-acetyllysine; alternate. K179 and K186 each carry N6-succinyllysine; alternate. T199 is an a ribonucleoside 5'-triphosphate binding site.

It belongs to the adenylate kinase family. AK3 subfamily. As to quaternary structure, monomer. Interacts with SLC25A5/ANT2. In terms of tissue distribution, highly expressed in kidney, moderately expressed in heart and liver and weakly expressed in brain.

It localises to the mitochondrion matrix. It catalyses the reaction a ribonucleoside 5'-phosphate + ATP = a ribonucleoside 5'-diphosphate + ADP. It carries out the reaction AMP + ATP = 2 ADP. The catalysed reaction is GTP + AMP = GDP + ADP. The enzyme catalyses CMP + ATP = CDP + ADP. It catalyses the reaction GTP + CMP = CDP + GDP. It carries out the reaction dAMP + ATP = dADP + ADP. The catalysed reaction is dCMP + ATP = dCDP + ADP. The enzyme catalyses a 2'-deoxyribonucleoside 5'-diphosphate + ATP = a 2'-deoxyribonucleoside 5'-triphosphate + ADP. It catalyses the reaction a ribonucleoside 5'-diphosphate + ATP = a ribonucleoside 5'-triphosphate + ADP. It carries out the reaction GDP + ATP = GTP + ADP. The catalysed reaction is CDP + GTP = CTP + GDP. The enzyme catalyses CDP + ATP = CTP + ADP. It catalyses the reaction UDP + ATP = UTP + ADP. It carries out the reaction GTP + UDP = UTP + GDP. The catalysed reaction is dADP + GTP = dATP + GDP. The enzyme catalyses dCDP + GTP = dCTP + GDP. It catalyses the reaction dCDP + ATP = dCTP + ADP. It carries out the reaction dGDP + ATP = dGTP + ADP. The catalysed reaction is dTDP + GTP = dTTP + GDP. The enzyme catalyses dTDP + ATP = dTTP + ADP. In terms of biological role, broad-specificity mitochondrial nucleoside phosphate kinase involved in cellular nucleotide homeostasis by catalyzing nucleoside-phosphate interconversions. Similar to other adenylate kinases, preferentially catalyzes the phosphorylation of the nucleoside monophosphate AMP with ATP as phosphate donor to produce ADP. Phosphorylates only AMP when using GTP as phosphate donor. In vitro, can also catalyze the phosphorylation of CMP, dAMP and dCMP and use GTP as an alternate phosphate donor. Moreover, exhibits a diphosphate kinase activity, producing ATP, CTP, GTP, UTP, TTP, dATP, dCTP and dGTP from the corresponding diphosphate substrates with either ATP or GTP as phosphate donors. Plays a role in controlling cellular ATP levels by regulating phosphorylation and activation of the energy sensor protein kinase AMPK. Plays a protective role in the cellular response to oxidative stress. The sequence is that of Adenylate kinase 4, mitochondrial from Homo sapiens (Human).